The sequence spans 100 residues: Small ribosomal subunit protein uS14c (100 aa).

The protein belongs to the universal ribosomal protein uS14 family. As to quaternary structure, part of the 30S ribosomal subunit.

The protein localises to the plastid. It is found in the chloroplast. In terms of biological role, binds 16S rRNA, required for the assembly of 30S particles. This chain is Small ribosomal subunit protein uS14c, found in Nasturtium officinale (Watercress).